A 373-amino-acid polypeptide reads, in one-letter code: tRNA-specific 2-thiouridylase MnmA (373 aa).

ATP-binding positions include A7–S14 and L33. C101 serves as the catalytic Nucleophile. A disulfide bridge links C101 with C215. ATP is bound at residue G125. The tract at residues K165–Q167 is interaction with tRNA. The active-site Cysteine persulfide intermediate is the C215.

It belongs to the MnmA/TRMU family.

The protein resides in the cytoplasm. The catalysed reaction is S-sulfanyl-L-cysteinyl-[protein] + uridine(34) in tRNA + AH2 + ATP = 2-thiouridine(34) in tRNA + L-cysteinyl-[protein] + A + AMP + diphosphate + H(+). Its function is as follows. Catalyzes the 2-thiolation of uridine at the wobble position (U34) of tRNA, leading to the formation of s(2)U34. The sequence is that of tRNA-specific 2-thiouridylase MnmA from Roseiflexus sp. (strain RS-1).